Here is a 159-residue protein sequence, read N- to C-terminus: Ethylene-responsive transcription factor ERF069 (159 aa).

2 disordered regions span residues 1 to 36 and 128 to 159; these read MKRI…KKLV and DAPT…EEVV. The AP2/ERF DNA-binding region spans 74-134; sequence KFRGVRQRPW…IGPDAPTNFG (61 aa). A compositionally biased stretch (basic and acidic residues) spans 136 to 148; the sequence is PDVDSAVVKKQDS.

The protein belongs to the AP2/ERF transcription factor family. ERF subfamily.

Its subcellular location is the nucleus. Probably acts as a transcriptional activator. Binds to the GCC-box pathogenesis-related promoter element. May be involved in the regulation of gene expression by stress factors and by components of stress signal transduction pathways. In Arabidopsis thaliana (Mouse-ear cress), this protein is Ethylene-responsive transcription factor ERF069 (ERF069).